Consider the following 29-residue polypeptide: Neurotoxin BmK A3-6 (29 aa).

In terms of processing, contains 3 disulfide bonds. As to expression, expressed by the venom gland.

The protein localises to the secreted. This is Neurotoxin BmK A3-6 from Olivierus martensii (Manchurian scorpion).